The following is a 53-amino-acid chain: UPF0391 membrane protein PputGB1_0151 (53 aa).

2 helical membrane-spanning segments follow: residues 4–24 (WAITFLIIAIVAAVLGFGGIA) and 29–49 (GIAKILFIVFLVLFVASFFFG).

The protein belongs to the UPF0391 family.

Its subcellular location is the cell membrane. This chain is UPF0391 membrane protein PputGB1_0151, found in Pseudomonas putida (strain GB-1).